Consider the following 250-residue polypeptide: 2,3-bisphosphoglycerate-dependent phosphoglycerate mutase (250 aa).

Residues 10–17 (RHGESQWN), 23–24 (TG), Arg62, 89–92 (ERHY), Lys100, 116–117 (RR), and 185–186 (GN) contribute to the substrate site. His11 serves as the catalytic Tele-phosphohistidine intermediate. The active-site Proton donor/acceptor is Glu89.

The protein belongs to the phosphoglycerate mutase family. BPG-dependent PGAM subfamily. Homodimer.

The catalysed reaction is (2R)-2-phosphoglycerate = (2R)-3-phosphoglycerate. It participates in carbohydrate degradation; glycolysis; pyruvate from D-glyceraldehyde 3-phosphate: step 3/5. In terms of biological role, catalyzes the interconversion of 2-phosphoglycerate and 3-phosphoglycerate. This chain is 2,3-bisphosphoglycerate-dependent phosphoglycerate mutase, found in Salmonella dublin (strain CT_02021853).